A 622-amino-acid chain; its full sequence is Solute carrier family 2, facilitated glucose transporter member 12 (622 aa).

The disordered stretch occupies residues 1–26 (MVPVENTEGPNLLNQKGREAETEGSC). Residues 1–44 (MVPVENTEGPNLLNQKGREAETEGSCGASGGGHPACAGGPSMFT) lie on the Cytoplasmic side of the membrane. Residues 45 to 65 (FLTSVTAAISGLLVGYELGLI) traverse the membrane as a helical segment. Over 66 to 84 (SGALLQIRTLLALTCHEQE) the chain is Extracellular. The helical transmembrane segment at 85 to 105 (MVVSSLLIGAFLASLTGGVLI) threads the bilayer. Residues 106 to 111 (DRYGRR) lie on the Cytoplasmic side of the membrane. Residues 112 to 132 (LAIILSSCLLGLGSLVLIMSL) traverse the membrane as a helical segment. At 133 to 141 (SYTLLIMGR) the chain is on the extracellular side. Residues 142–162 (VAIGVSISLSSIATCVYIAEI) traverse the membrane as a helical segment. The Cytoplasmic segment spans residues 163–168 (APQHRR). A helical membrane pass occupies residues 169 to 189 (GLLVSLNELMIVTGILFAYIS). The Extracellular segment spans residues 190–201 (NYAFANISNGWK). Asn195 carries N-linked (GlcNAc...) asparagine glycosylation. Residues 202–222 (YMFGLVIPLGVLQAIAMYFLP) form a helical membrane-spanning segment. The Cytoplasmic portion of the chain corresponds to 223-282 (PSPRFLVMKGQEESAGKVLRKLRVISDTTEELTLIKSSLKDEYQYSFWDLFRSKDNMRTR). Residues 283 to 303 (ILIGLTLVFFVQTTGQPNILF) traverse the membrane as a helical segment. The Extracellular segment spans residues 304 to 321 (YASTVLKSVGFQSNEAAS). A helical membrane pass occupies residues 322–342 (LASTGVGVVKVVSTIPATLLV). Over 343 to 349 (DHIGSKT) the chain is Cytoplasmic. The helical transmembrane segment at 350-370 (FLCIGSSVMSASLLTMGIVNL) threads the bilayer. Over 371 to 471 (NINMNFTNIC…PAAYKWLSLA (101 aa)) the chain is Extracellular. Residues Asn375, Asn387, Asn400, and Asn405 are each glycosylated (N-linked (GlcNAc...) asparagine). The helical transmembrane segment at 472–492 (SLLVYVAAFSIGLGPMPWLVL) threads the bilayer. At 493 to 503 (SEIFPGGIRGR) the chain is on the cytoplasmic side. A helical transmembrane segment spans residues 504–524 (AMALTSSMNWGVNLLISLTFL). At 525–533 (TVTDLIGLS) the chain is on the extracellular side. The helical transmembrane segment at 534-554 (WVCFIYTIMSLASLAFVVLFI) threads the bilayer. The Cytoplasmic portion of the chain corresponds to 555–622 (PETKGCSLEQ…GQSQRPSPDT (68 aa)).

It belongs to the major facilitator superfamily. Sugar transporter (TC 2.A.1.1) family. Glucose transporter subfamily. As to expression, expressed in skeletal muscle, heart, brain, kidney, spleen, adipose tissues and to a lesser extent in small intestine and lung.

It localises to the cell membrane. The protein resides in the endomembrane system. The protein localises to the cytoplasm. It is found in the perinuclear region. The enzyme catalyses D-glucose(out) = D-glucose(in). Insulin-independent facilitative glucose transporter. This is Solute carrier family 2, facilitated glucose transporter member 12 from Mus musculus (Mouse).